The primary structure comprises 155 residues: Myosin light chain alkali (155 aa).

EF-hand domains follow at residues 7 to 41 (REVENVEFVFEVMGSPGEGIDAFDLGDALRALNLN) and 80 to 115 (GCYEDFIECLKLYDKEENGTMLLAELQHALLALGES).

As to quaternary structure, myosin is a hexamer of 2 heavy chains and 4 light chains.

In Drosophila virilis (Fruit fly), this protein is Myosin light chain alkali (Mlc1).